A 537-amino-acid chain; its full sequence is Cytochrome P450 monooxygenase yanC (537 aa).

The signal sequence occupies residues 1-21 (MALVHLTALAACGLLLVILRA). A heme-binding site is contributed by cysteine 449.

The protein belongs to the cytochrome P450 family. Requires heme as cofactor.

It functions in the pathway secondary metabolite biosynthesis; terpenoid biosynthesis. Its function is as follows. Cytochrome P450 monooxygenase; part of the gene cluster that mediates the biosynthesis of yanuthone D, a fungal isoprenoid epoxycyclohexenone that acts as an antibiotic against fungi and bacteria. The first step of the pathway is the synthesis of 6-methylsalicylic acid (6-MSA) by the polyketide synthase yanA. 6-MSA is then converted to m-cresol by the decarboxylase yanB. The cytochrome P450 monooxygenase yanC then catalyzes the oxidation of m-cresol to toluquinol. Epoxidation of toluquinol is then performed by the short chain dehydrogenase yanD, with the help of yanE, and a further prenylation by yanG leads to 7-deacetoxyyanuthone A. The next step is the hydroxylation of C-22 of 7-deacetoxyyanuthone A by the cytochrome P450 monooxygenase yanH to yield 22-deacetylyanuthone A. O-Mevalon transferase yanI then attaches mevalon to the hydroxyl group of 22-deacetylyanuthone A to produce yanuthone E. Finally, the FAD-dependent monooxygenase yanF oxidizes the hydroxyl group at C15 of yanuthone E to form yanuthone D. Furthermore, several branching points in the pathway lead to the production of yanuthones F and G from 7-deacetoxyyanuthone A; yanuthones H and I from 22-deacetylyanuthone A; and yanuthone J from yanuthone E. YanC is also involved in the synthesis of yanuthone X1 which does not have 6-methylsalicylic acid (6-MSA) as precursor. The polypeptide is Cytochrome P450 monooxygenase yanC (Aspergillus niger (strain ATCC 1015 / CBS 113.46 / FGSC A1144 / LSHB Ac4 / NCTC 3858a / NRRL 328 / USDA 3528.7)).